The sequence spans 374 residues: DNA-directed RNA polymerase subunit alpha (374 aa).

The segment at 1–257 (MSDNAHNLLY…KHFSIFENMD (257 aa)) is alpha N-terminal domain (alpha-NTD). The segment at 274–374 (KDDILHKLIL…EKIRAKNIKG (101 aa)) is alpha C-terminal domain (alpha-CTD).

This sequence belongs to the RNA polymerase alpha chain family. Homodimer. The RNAP catalytic core consists of 2 alpha, 1 beta, 1 beta' and 1 omega subunit. When a sigma factor is associated with the core the holoenzyme is formed, which can initiate transcription.

It catalyses the reaction RNA(n) + a ribonucleoside 5'-triphosphate = RNA(n+1) + diphosphate. DNA-dependent RNA polymerase catalyzes the transcription of DNA into RNA using the four ribonucleoside triphosphates as substrates. The protein is DNA-directed RNA polymerase subunit alpha of Chlamydia pneumoniae (Chlamydophila pneumoniae).